The chain runs to 441 residues: Xylose isomerase (441 aa).

Active-site residues include H99 and D102. Mn(2+) is bound by residues E230, E266, D294, D305, D307, and D337.

The protein belongs to the xylose isomerase family. Homotetramer. Mn(2+) is required as a cofactor.

It is found in the cytoplasm. The enzyme catalyses alpha-D-xylose = alpha-D-xylulofuranose. The sequence is that of Xylose isomerase (xylA) from Geobacillus stearothermophilus (Bacillus stearothermophilus).